Here is a 1438-residue protein sequence, read N- to C-terminus: DNA polymerase III PolC-type (1438 aa).

One can recognise an Exonuclease domain in the interval 422–578; it reads YVVFDVETTG…YDTEATAYIF (157 aa).

Belongs to the DNA polymerase type-C family. PolC subfamily.

The protein localises to the cytoplasm. The enzyme catalyses DNA(n) + a 2'-deoxyribonucleoside 5'-triphosphate = DNA(n+1) + diphosphate. Required for replicative DNA synthesis. This DNA polymerase also exhibits 3' to 5' exonuclease activity. In Staphylococcus aureus (strain MRSA252), this protein is DNA polymerase III PolC-type.